Consider the following 95-residue polypeptide: DNA-directed RNA polymerase subunit Rpo11 (95 aa).

The protein belongs to the archaeal Rpo11/eukaryotic RPB11/RPC19 RNA polymerase subunit family. As to quaternary structure, part of the RNA polymerase complex.

It is found in the cytoplasm. The enzyme catalyses RNA(n) + a ribonucleoside 5'-triphosphate = RNA(n+1) + diphosphate. In terms of biological role, DNA-dependent RNA polymerase (RNAP) catalyzes the transcription of DNA into RNA using the four ribonucleoside triphosphates as substrates. The sequence is that of DNA-directed RNA polymerase subunit Rpo11 from Pyrococcus furiosus (strain ATCC 43587 / DSM 3638 / JCM 8422 / Vc1).